A 248-amino-acid chain; its full sequence is Indole-3-glycerol phosphate synthase (248 aa).

Belongs to the TrpC family.

The catalysed reaction is 1-(2-carboxyphenylamino)-1-deoxy-D-ribulose 5-phosphate + H(+) = (1S,2R)-1-C-(indol-3-yl)glycerol 3-phosphate + CO2 + H2O. The protein operates within amino-acid biosynthesis; L-tryptophan biosynthesis; L-tryptophan from chorismate: step 4/5. In Sulfolobus acidocaldarius (strain ATCC 33909 / DSM 639 / JCM 8929 / NBRC 15157 / NCIMB 11770), this protein is Indole-3-glycerol phosphate synthase.